Here is an 87-residue protein sequence, read N- to C-terminus: AASAGGGARSADDIIAKHCNACHGAGVLGAPKIGDTAAWKERADHQGGLDGILAKAISGINAMPPKGTCADCSDDELREAIQKMSGL.

Residues Cys-19, Cys-22, His-23, and Met-63 each contribute to the heme site. Cys-69 and Cys-72 are oxidised to a cystine.

It belongs to the cytochrome c family. As to quaternary structure, homodimer. In terms of processing, binds 1 heme group per subunit.

It is unreactive with cytochrome c reductase or oxidase but seems to function as an intermediate in nitrate respiration of facultative anaerobic pseudmonads. This Ectopseudomonas mendocina (Pseudomonas mendocina) protein is Cytochrome c5.